The following is a 409-amino-acid chain: Histone deacetylase 7 (409 aa).

Residues 11–324 are histone deacetylase; sequence RVSYFYEPMI…WCYETAIAVG (314 aa). The active-site Proton donor/acceptor is the histidine 148. Aspartate 267 provides a ligand contact to Zn(2+). The interval 383–409 is disordered; the sequence is PFQDTPSSSQATEAAEVDMEKRNDPRI. Residues 384–394 are compositionally biased toward polar residues; the sequence is FQDTPSSSQAT. A compositionally biased stretch (basic and acidic residues) spans 400 to 409; it reads DMEKRNDPRI.

This sequence belongs to the histone deacetylase family. HD type 1 subfamily. It depends on Zn(2+) as a cofactor. As to expression, low expression in flowers.

It localises to the nucleus. The catalysed reaction is N(6)-acetyl-L-lysyl-[histone] + H2O = L-lysyl-[histone] + acetate. In terms of biological role, responsible for the deacetylation of lysine residues on the N-terminal part of the core histones (H2A, H2B, H3 and H4). Histone deacetylation gives a tag for epigenetic repression and plays an important role in transcriptional regulation, cell cycle progression and developmental events. May be involved in flowering induction. Histone deacetylases act via the formation of large multiprotein complexes. The chain is Histone deacetylase 7 (HDA7) from Arabidopsis thaliana (Mouse-ear cress).